A 372-amino-acid chain; its full sequence is PqqA peptide cyclase (372 aa).

The Radical SAM core domain occupies 4 to 220 (APPPLSVLLE…ETARRQLGDR (217 aa)). The [4Fe-4S] cluster site is built by C18, C22, and C25.

The protein belongs to the radical SAM superfamily. PqqE family. As to quaternary structure, interacts with PqqD. The interaction is necessary for activity of PqqE. [4Fe-4S] cluster is required as a cofactor.

The catalysed reaction is [PQQ precursor protein] + S-adenosyl-L-methionine = E-Y cross-linked-[PQQ precursor protein] + 5'-deoxyadenosine + L-methionine + H(+). It participates in cofactor biosynthesis; pyrroloquinoline quinone biosynthesis. Catalyzes the cross-linking of a glutamate residue and a tyrosine residue in the PqqA protein as part of the biosynthesis of pyrroloquinoline quinone (PQQ). This chain is PqqA peptide cyclase, found in Xanthomonas axonopodis pv. citri (strain 306).